The chain runs to 96 residues: Nucleoid-associated protein CT_335 (96 aa).

It belongs to the YbaB/EbfC family. Homodimer.

It localises to the cytoplasm. It is found in the nucleoid. Its function is as follows. Binds to DNA and alters its conformation. May be involved in regulation of gene expression, nucleoid organization and DNA protection. The protein is Nucleoid-associated protein CT_335 of Chlamydia trachomatis serovar D (strain ATCC VR-885 / DSM 19411 / UW-3/Cx).